The sequence spans 602 residues: Cholinesterase (602 aa).

The N-terminal stretch at 1–28 (MQSRSTVIYIRFVLWFLLLWVLFEKSHT) is a signal peptide. N-linked (GlcNAc...) asparagine glycosylation is found at Asn85 and Asn134. Position 144-145 (144-145 (GS)) interacts with substrate. Ser226 functions as the Acyl-ester intermediate in the catalytic mechanism. Phosphoserine is present on Ser226. Asn269 and Asn284 each carry an N-linked (GlcNAc...) asparagine glycan. Glu353 acts as the Charge relay system in catalysis. N-linked (GlcNAc...) asparagine glycosylation occurs at Asn369. His466 (charge relay system) is an active-site residue. Residues Asn483, Asn509, Asn513, and Asn514 are each glycosylated (N-linked (GlcNAc...) asparagine).

The protein belongs to the type-B carboxylesterase/lipase family. As to quaternary structure, homotetramer; disulfide-linked. Dimer of dimers. As to expression, present in most cells except erythrocytes.

Its subcellular location is the secreted. It carries out the reaction an acylcholine + H2O = a carboxylate + choline + H(+). Esterase with broad substrate specificity. Contributes to the inactivation of the neurotransmitter acetylcholine. Can degrade neurotoxic organophosphate esters. The chain is Cholinesterase (BCHE) from Bos taurus (Bovine).